We begin with the raw amino-acid sequence, 415 residues long: L-cysteine:1D-myo-inositol 2-amino-2-deoxy-alpha-D-glucopyranoside ligase (415 aa).

C43 serves as a coordination point for Zn(2+). Residues 43–46 (CGIT), T58, and 81–83 (NVT) each bind L-cysteinyl-5'-AMP. The 'HIGH' region motif lies at 45 to 55 (ITPYDATHLGH). Positions 187-192 (ERGGDP) match the 'ERGGDP' region motif. An L-cysteinyl-5'-AMP-binding site is contributed by W227. Residue C231 coordinates Zn(2+). Residue 249–251 (GSD) participates in L-cysteinyl-5'-AMP binding. H256 contributes to the Zn(2+) binding site. L-cysteinyl-5'-AMP is bound at residue I283. The 'KMSKS' region signature appears at 289–293 (KMSKS).

This sequence belongs to the class-I aminoacyl-tRNA synthetase family. MshC subfamily. As to quaternary structure, monomer. Requires Zn(2+) as cofactor.

It catalyses the reaction 1D-myo-inositol 2-amino-2-deoxy-alpha-D-glucopyranoside + L-cysteine + ATP = 1D-myo-inositol 2-(L-cysteinylamino)-2-deoxy-alpha-D-glucopyranoside + AMP + diphosphate + H(+). Its function is as follows. Catalyzes the ATP-dependent condensation of GlcN-Ins and L-cysteine to form L-Cys-GlcN-Ins. The chain is L-cysteine:1D-myo-inositol 2-amino-2-deoxy-alpha-D-glucopyranoside ligase from Saccharomonospora viridis (strain ATCC 15386 / DSM 43017 / JCM 3036 / CCUG 5913 / NBRC 12207 / NCIMB 9602 / P101) (Thermoactinomyces viridis).